The primary structure comprises 200 residues: Recombination protein RecR (200 aa).

The segment at 57–72 adopts a C4-type zinc-finger fold; sequence CDSCQNFSDTEICQIC. A Toprim domain is found at 80–175; that stretch reads GTLCVVESPS…LITRLAHGIP (96 aa).

The protein belongs to the RecR family.

Functionally, may play a role in DNA repair. It seems to be involved in an RecBC-independent recombinational process of DNA repair. It may act with RecF and RecO. The chain is Recombination protein RecR from Marinobacter nauticus (strain ATCC 700491 / DSM 11845 / VT8) (Marinobacter aquaeolei).